The sequence spans 689 residues: DNA topoisomerase 1 (689 aa).

In terms of domain architecture, Toprim spans Asp-3–Ile-113. Mg(2+) is bound by residues Glu-9 and Asp-82. A Topo IA-type catalytic domain is found at Glu-129 to Glu-557. The interaction with DNA stretch occupies residues Ser-163–Gln-168. Catalysis depends on Tyr-298, which acts as the O-(5'-phospho-DNA)-tyrosine intermediate. The interval Ser-328–Met-357 is disordered. C4-type zinc fingers lie at residues Cys-577 to Cys-603, Cys-617 to Cys-645, and Cys-658 to Cys-681.

Belongs to the type IA topoisomerase family. In terms of assembly, monomer. Mg(2+) serves as cofactor.

It catalyses the reaction ATP-independent breakage of single-stranded DNA, followed by passage and rejoining.. In terms of biological role, releases the supercoiling and torsional tension of DNA, which is introduced during the DNA replication and transcription, by transiently cleaving and rejoining one strand of the DNA duplex. Introduces a single-strand break via transesterification at a target site in duplex DNA. The scissile phosphodiester is attacked by the catalytic tyrosine of the enzyme, resulting in the formation of a DNA-(5'-phosphotyrosyl)-enzyme intermediate and the expulsion of a 3'-OH DNA strand. The free DNA strand then undergoes passage around the unbroken strand, thus removing DNA supercoils. Finally, in the religation step, the DNA 3'-OH attacks the covalent intermediate to expel the active-site tyrosine and restore the DNA phosphodiester backbone. This Staphylococcus aureus (strain N315) protein is DNA topoisomerase 1.